Consider the following 140-residue polypeptide: Large ribosomal subunit protein uL11 (140 aa).

This sequence belongs to the universal ribosomal protein uL11 family. In terms of assembly, part of the ribosomal stalk of the 50S ribosomal subunit. Interacts with L10 and the large rRNA to form the base of the stalk. L10 forms an elongated spine to which L12 dimers bind in a sequential fashion forming a multimeric L10(L12)X complex. Post-translationally, one or more lysine residues are methylated.

Forms part of the ribosomal stalk which helps the ribosome interact with GTP-bound translation factors. This Geotalea daltonii (strain DSM 22248 / JCM 15807 / FRC-32) (Geobacter daltonii) protein is Large ribosomal subunit protein uL11.